Here is a 662-residue protein sequence, read N- to C-terminus: Glycogen debranching enzyme (662 aa).

Asp338 (nucleophile) is an active-site residue. The active-site Proton donor is Glu373.

The protein belongs to the glycosyl hydrolase 13 family.

The catalysed reaction is Hydrolysis of (1-&gt;6)-alpha-D-glucosidic linkages to branches with degrees of polymerization of three or four glucose residues in limit dextrin.. It participates in glycan degradation; glycogen degradation. Functionally, removes maltotriose and maltotetraose chains that are attached by 1,6-alpha-linkage to the limit dextrin main chain, generating a debranched limit dextrin. This Yersinia pestis protein is Glycogen debranching enzyme.